Consider the following 422-residue polypeptide: Enolase (422 aa).

Residue glutamine 163 participates in (2R)-2-phosphoglycerate binding. Glutamate 205 acts as the Proton donor in catalysis. Mg(2+)-binding residues include aspartate 242, glutamate 283, and aspartate 310. Lysine 335, arginine 364, serine 365, and lysine 386 together coordinate (2R)-2-phosphoglycerate. Catalysis depends on lysine 335, which acts as the Proton acceptor.

This sequence belongs to the enolase family. Mg(2+) is required as a cofactor.

The protein localises to the cytoplasm. The protein resides in the secreted. It localises to the cell surface. It carries out the reaction (2R)-2-phosphoglycerate = phosphoenolpyruvate + H2O. It participates in carbohydrate degradation; glycolysis; pyruvate from D-glyceraldehyde 3-phosphate: step 4/5. Functionally, catalyzes the reversible conversion of 2-phosphoglycerate (2-PG) into phosphoenolpyruvate (PEP). It is essential for the degradation of carbohydrates via glycolysis. This chain is Enolase, found in Bdellovibrio bacteriovorus (strain ATCC 15356 / DSM 50701 / NCIMB 9529 / HD100).